The primary structure comprises 277 residues: PHD finger protein ALFIN-LIKE 9 (277 aa).

Disordered regions lie at residues 138–206 (KSKA…EEEH) and 255–277 (PSCSGGNGGGGGGSGNGKRARPS). A compositionally biased stretch (low complexity) spans 145 to 160 (SANNHSNSKSKSSNKT). A PHD-type zinc finger spans residues 208–260 (ETLCGACGESYGADEFWICCDICEKWFHGKCVKITPAKAEHIKQYKCPSCSGG). Gly residues predominate over residues 259–270 (GGNGGGGGGSGN).

Belongs to the Alfin family. As to quaternary structure, interacts with H3K4me3 and to a lesser extent with H3K4me2.

Its subcellular location is the nucleus. Its function is as follows. Histone-binding component that specifically recognizes H3 tails trimethylated on 'Lys-4' (H3K4me3), which mark transcription start sites of virtually all active genes. The protein is PHD finger protein ALFIN-LIKE 9 of Oryza sativa subsp. indica (Rice).